The following is a 138-amino-acid chain: Centromere protein S (138 aa).

Met-1 carries the post-translational modification N-acetylmethionine. Residues 110–138 (RKAQKKKKSEDGSKNSRQPAEAGVVESEN) form a disordered region.

This sequence belongs to the TAF9 family. CENP-S/MHF1 subfamily. In terms of assembly, heterodimer with CENPX, sometimes called MHF; this interaction stabilizes both partners. MHF heterodimers can assemble to form tetrameric structures. MHF also coassemble with CENPT-CENPW heterodimers at centromeres to form the tetrameric CENP-T-W-S-X complex. Forms a discrete complex with FANCM and CENPX, called FANCM-MHF; this interaction, probably mediated by direct binding between CENPS and FANCM, leads to synergistic activation of double-stranded DNA binding and strongly stimulates FANCM-mediated DNA remodeling. Recruited by FANCM to the Fanconi anemia (FA) core complex, which consists of CENPS, CENPX, FANCA, FANCB, FANCC, FANCE, FANCF, FANCG, FANCL, FANCM, FAAP24 and FAAP100. The FA core complex associates with Bloom syndrome (BLM) complex, which consists of at least BLM, DNA topoisomerase 3-alpha (TOP3A), RMI1/BLAP75, RPA1/RPA70 and RPA2/RPA32. The super complex between FA and BLM is called BRAFT. Component of the CENPA-CAD complex, composed of CENPI, CENPK, CENPL, CENPO, CENPP, CENPQ, CENPR and CENPS. The CENPA-CAD complex is probably recruited on centromeres by the CENPA-NAC complex, composed of at least CENPA, CENPC, CENPH, CENPM, CENPN, CENPT and CENPU. In terms of tissue distribution, ubiquitously expressed.

The protein resides in the nucleus. It localises to the chromosome. It is found in the centromere. The protein localises to the kinetochore. In terms of biological role, DNA-binding component of the Fanconi anemia (FA) core complex. Required for the normal activation of the FA pathway, leading to monoubiquitination of the FANCI-FANCD2 complex in response to DNA damage, cellular resistance to DNA cross-linking drugs, and prevention of chromosomal breakage. In complex with CENPX (MHF heterodimer), crucial cofactor for FANCM in both binding and ATP-dependent remodeling of DNA. Stabilizes FANCM. In complex with CENPX and FANCM (but not other FANC proteins), rapidly recruited to blocked forks and promotes gene conversion at blocked replication forks. In complex with CENPT, CENPW and CENPX (CENP-T-W-S-X heterotetramer), involved in the formation of a functional kinetochore outer plate, which is essential for kinetochore-microtubule attachment and faithful mitotic progression. As a component of MHF and CENP-T-W-S-X complexes, binds DNA and bends it to form a nucleosome-like structure. DNA-binding function is fulfilled in the presence of CENPX, with the following preference for DNA substates: Holliday junction &gt; double-stranded &gt; splay arm &gt; single-stranded. Does not bind DNA on its own. This chain is Centromere protein S (CENPS), found in Homo sapiens (Human).